The primary structure comprises 108 residues: Large ribosomal subunit protein eL30 (108 aa).

It belongs to the eukaryotic ribosomal protein eL30 family.

This chain is Large ribosomal subunit protein eL30 (rpl30e), found in Saccharolobus solfataricus (strain ATCC 35092 / DSM 1617 / JCM 11322 / P2) (Sulfolobus solfataricus).